Here is a 99-residue protein sequence, read N- to C-terminus: Large ribosomal subunit protein uL23 (99 aa).

Belongs to the universal ribosomal protein uL23 family. Part of the 50S ribosomal subunit. Contacts protein L29, and trigger factor when it is bound to the ribosome.

In terms of biological role, one of the early assembly proteins it binds 23S rRNA. One of the proteins that surrounds the polypeptide exit tunnel on the outside of the ribosome. Forms the main docking site for trigger factor binding to the ribosome. This chain is Large ribosomal subunit protein uL23, found in Pseudomonas savastanoi pv. phaseolicola (strain 1448A / Race 6) (Pseudomonas syringae pv. phaseolicola (strain 1448A / Race 6)).